A 645-amino-acid polypeptide reads, in one-letter code: Matrix metalloproteinase-24 (645 aa).

Over residues 1 to 10 the composition is skewed to low complexity; sequence MPRSRGGRAA. The segment at 1 to 26 is disordered; that stretch reads MPRSRGGRAAPGPPPPPPPPGQAPRW. The N-terminal stretch at 1–52 is a signal peptide; it reads MPRSRGGRAAPGPPPPPPPPGQAPRWSRWRVPGRLLLLLLPALCCLPGAARA. Pro residues predominate over residues 11 to 22; that stretch reads PGPPPPPPPPGQ. A propeptide spanning residues 53 to 155 is cleaved from the precursor; the sequence is AAAAAGAGNR…HLSRRRRNKR (103 aa). Residues 53-602 are Extracellular-facing; the sequence is AAAAAGAGNR…INDVPGSVNA (550 aa). Residues 137–144 carry the Cysteine switch motif; that stretch reads PRCGVPDH. 2 residues coordinate Zn(2+): cysteine 139 and histidine 282. Residue glutamate 283 is part of the active site. Residues histidine 286 and histidine 292 each coordinate Zn(2+). The interval 323 to 380 is disordered; the sequence is QKIYGPPAEPLEPTRPLPTLPVRRIHSPSERKHERQPRPPRPPLGDRPSTPGTKPNIC. Pro residues predominate over residues 329–341; the sequence is PAEPLEPTRPLPT. The span at 349–359 shows a compositional bias: basic and acidic residues; the sequence is SPSERKHERQP. Hemopexin repeat units follow at residues 377–425, 426–471, 473–521, and 522–569; these read PNIC…WKGL, PARI…GSCL, REGI…KGIP, and QAPQ…WMGC. Cysteine 380 and cysteine 569 form a disulfide bridge. The helical transmembrane segment at 603–623 threads the bilayer; it reads VAVVIPCILSLCILVLVYTIF. Residues 624 to 645 are Cytoplasmic-facing; that stretch reads QFKNKTGPQPVTYYKRPVQEWV. A PDZ-binding motif is present at residues 643-645; the sequence is EWV.

The protein belongs to the peptidase M10A family. As to quaternary structure, interacts (via PDZ-binding motif) with APBA3 (via PDZ domain). Interacts with GRIP1 and GRIP2. Zn(2+) serves as cofactor. Requires Ca(2+) as cofactor. Cleaved by a furin endopeptidase in the trans-Golgi network. In terms of tissue distribution, predominantly expressed in brain, kidney, pancreas and lung. Overexpressed in a series of brain tumors, including astrocytomas and glioblastomas.

The protein resides in the cell membrane. It is found in the golgi apparatus. It localises to the trans-Golgi network membrane. Its subcellular location is the secreted. The protein localises to the extracellular space. The protein resides in the extracellular matrix. In terms of biological role, metalloprotease that mediates cleavage of N-cadherin (CDH2) and acts as a regulator of neuro-immune interactions and neural stem cell quiescence. Involved in cell-cell interactions between nociceptive neurites and mast cells, possibly by mediating cleavage of CDH2, thereby acting as a mediator of peripheral thermal nociception and inflammatory hyperalgesia. Key regulator of neural stem cells quiescence by mediating cleavage of CDH2, affecting CDH2-mediated anchorage of neural stem cells to ependymocytes in the adult subependymal zone, leading to modulate their quiescence. May play a role in axonal growth. Able to activate progelatinase A. May also be a proteoglycanase involved in degradation of proteoglycans, such as dermatan sulfate and chondroitin sulfate proteoglycans. Cleaves partially fibronectin, but not collagen type I, nor laminin. The sequence is that of Matrix metalloproteinase-24 (MMP24) from Homo sapiens (Human).